The following is a 203-amino-acid chain: MGKKINPILFRLKKNTVYHSLWYTFKKNFCYYLKCDILIREIIRRNFLFINLSYIDIIISNKLTINLYINNVDQFNIIENYLDVFVFQISKILKKNVILNFVFNHVLNAKNIAYNVVNQILNKNSIKKIIKEELLKNRKNFGCKIQISGRLEGVDIARKEWSLIGRIPLHTIKYNLEYYQCETLTQYGILGVKIWLFKKNNEK.

The protein belongs to the universal ribosomal protein uS3 family. Part of the 30S ribosomal subunit. Forms a tight complex with proteins S10 and S14.

Binds the lower part of the 30S subunit head. Binds mRNA in the 70S ribosome, positioning it for translation. This Carsonella ruddii (strain PV) protein is Small ribosomal subunit protein uS3.